A 305-amino-acid polypeptide reads, in one-letter code: Methionyl-tRNA formyltransferase (305 aa).

108–111 is a binding site for (6S)-5,6,7,8-tetrahydrofolate; it reads SLLP.

It belongs to the Fmt family.

It carries out the reaction L-methionyl-tRNA(fMet) + (6R)-10-formyltetrahydrofolate = N-formyl-L-methionyl-tRNA(fMet) + (6S)-5,6,7,8-tetrahydrofolate + H(+). In terms of biological role, attaches a formyl group to the free amino group of methionyl-tRNA(fMet). The formyl group appears to play a dual role in the initiator identity of N-formylmethionyl-tRNA by promoting its recognition by IF2 and preventing the misappropriation of this tRNA by the elongation apparatus. The protein is Methionyl-tRNA formyltransferase of Thermus thermophilus (strain ATCC 27634 / DSM 579 / HB8).